A 413-amino-acid polypeptide reads, in one-letter code: Aspartate kinase (413 aa).

2 consecutive ACT domains span residues 267–341 and 347–413; these read LTIR…GDTK and IVGV…RQGE.

This sequence belongs to the aspartokinase family. Homotrimer. In the presence of inhibitory amino acids the Stokes radius of the protein increases, suggesting its oligomeric state may change.

It is found in the cytoplasm. It catalyses the reaction L-aspartate + ATP = 4-phospho-L-aspartate + ADP. The protein operates within amino-acid biosynthesis; L-lysine biosynthesis via DAP pathway; (S)-tetrahydrodipicolinate from L-aspartate: step 1/4. It participates in amino-acid biosynthesis; L-methionine biosynthesis via de novo pathway; L-homoserine from L-aspartate: step 1/3. Its pathway is amino-acid biosynthesis; L-threonine biosynthesis; L-threonine from L-aspartate: step 1/5. Its activity is regulated as follows. Activated by L-lysine, L-methionine, and L-isoleucine. L-threonine, at low concentrations, is a mild activator and has a weak inhibitory effect only at concentrations over 10 mM. Strongly feedback inhibited by the concerted combination of L-lysine and L-threonine and slightly feedback inhibited by the concerted combination of L-threonine and L-methionine. Activated by the combination of L-methionine and L-lysine, L-methionine and L-isoleucine and L-lysine and L-isoleucine. Involved in the biosynthesis of L-aspartate-beta-semialdehyde which is a central intermediate in the biosynthesis of different amino acids (L-lysine, L-methionine, L-threonine). Catalyzes the phosphorylation of the beta-carboxyl group of L-aspartate to yield 4-phospho-L-aspartate. The sequence is that of Aspartate kinase from Pseudomonas fluorescens (strain SBW25).